We begin with the raw amino-acid sequence, 698 residues long: DNA-directed RNA polymerase subunit beta' (698 aa).

Residues cysteine 69, cysteine 71, cysteine 89, and cysteine 92 each contribute to the Zn(2+) site. Mg(2+) is bound by residues aspartate 509, aspartate 511, and aspartate 513.

The protein belongs to the RNA polymerase beta' chain family. RpoC1 subfamily. In plastids the minimal PEP RNA polymerase catalytic core is composed of four subunits: alpha, beta, beta', and beta''. When a (nuclear-encoded) sigma factor is associated with the core the holoenzyme is formed, which can initiate transcription. Requires Mg(2+) as cofactor. Zn(2+) serves as cofactor.

It localises to the plastid. It is found in the chloroplast. It catalyses the reaction RNA(n) + a ribonucleoside 5'-triphosphate = RNA(n+1) + diphosphate. Functionally, DNA-dependent RNA polymerase catalyzes the transcription of DNA into RNA using the four ribonucleoside triphosphates as substrates. The chain is DNA-directed RNA polymerase subunit beta' from Cryptomeria japonica (Japanese cedar).